A 346-amino-acid polypeptide reads, in one-letter code: N-acetyl-gamma-glutamyl-phosphate reductase (346 aa).

Residue C150 is part of the active site.

Belongs to the NAGSA dehydrogenase family. Type 1 subfamily.

The protein localises to the cytoplasm. It catalyses the reaction N-acetyl-L-glutamate 5-semialdehyde + phosphate + NADP(+) = N-acetyl-L-glutamyl 5-phosphate + NADPH + H(+). It functions in the pathway amino-acid biosynthesis; L-arginine biosynthesis; N(2)-acetyl-L-ornithine from L-glutamate: step 3/4. Its function is as follows. Catalyzes the NADPH-dependent reduction of N-acetyl-5-glutamyl phosphate to yield N-acetyl-L-glutamate 5-semialdehyde. This chain is N-acetyl-gamma-glutamyl-phosphate reductase, found in Acetivibrio thermocellus (strain ATCC 27405 / DSM 1237 / JCM 9322 / NBRC 103400 / NCIMB 10682 / NRRL B-4536 / VPI 7372) (Clostridium thermocellum).